Here is a 253-residue protein sequence, read N- to C-terminus: Acetylglutamate kinase (253 aa).

Substrate-binding positions include 40–41 (GG), Arg62, and Asn154.

Belongs to the acetylglutamate kinase family. ArgB subfamily.

Its subcellular location is the cytoplasm. The enzyme catalyses N-acetyl-L-glutamate + ATP = N-acetyl-L-glutamyl 5-phosphate + ADP. It functions in the pathway amino-acid biosynthesis; L-arginine biosynthesis; N(2)-acetyl-L-ornithine from L-glutamate: step 2/4. In terms of biological role, catalyzes the ATP-dependent phosphorylation of N-acetyl-L-glutamate. This Staphylococcus saprophyticus subsp. saprophyticus (strain ATCC 15305 / DSM 20229 / NCIMB 8711 / NCTC 7292 / S-41) protein is Acetylglutamate kinase.